The chain runs to 156 residues: 6,7-dimethyl-8-ribityllumazine synthase (156 aa).

Residues F23, 57-59 (AFE), and 81-83 (AVI) contribute to the 5-amino-6-(D-ribitylamino)uracil site. Residue 86-87 (ST) coordinates (2S)-2-hydroxy-3-oxobutyl phosphate. Catalysis depends on H89, which acts as the Proton donor. Residue F114 coordinates 5-amino-6-(D-ribitylamino)uracil. (2S)-2-hydroxy-3-oxobutyl phosphate is bound at residue R128.

This sequence belongs to the DMRL synthase family.

The enzyme catalyses (2S)-2-hydroxy-3-oxobutyl phosphate + 5-amino-6-(D-ribitylamino)uracil = 6,7-dimethyl-8-(1-D-ribityl)lumazine + phosphate + 2 H2O + H(+). It participates in cofactor biosynthesis; riboflavin biosynthesis; riboflavin from 2-hydroxy-3-oxobutyl phosphate and 5-amino-6-(D-ribitylamino)uracil: step 1/2. Its function is as follows. Catalyzes the formation of 6,7-dimethyl-8-ribityllumazine by condensation of 5-amino-6-(D-ribitylamino)uracil with 3,4-dihydroxy-2-butanone 4-phosphate. This is the penultimate step in the biosynthesis of riboflavin. The polypeptide is 6,7-dimethyl-8-ribityllumazine synthase (Campylobacter fetus subsp. fetus (strain 82-40)).